Reading from the N-terminus, the 520-residue chain is Ribonuclease Y (520 aa).

A helical membrane pass occupies residues Thr4–Val24. A disordered region spans residues Lys86–Glu116. The 64-residue stretch at Thr210–Leu273 folds into the KH domain. Residues Val336 to Ala429 form the HD domain.

This sequence belongs to the RNase Y family.

The protein resides in the cell membrane. In terms of biological role, endoribonuclease that initiates mRNA decay. This Bacillus cereus (strain ATCC 10987 / NRS 248) protein is Ribonuclease Y.